We begin with the raw amino-acid sequence, 283 residues long: Shikimate dehydrogenase (NADP(+)) (283 aa).

Shikimate contacts are provided by residues 16–18 (SLS) and Thr63. Residue Lys67 is the Proton acceptor of the active site. Asp79 is a binding site for NADP(+). Residues Asn88 and Asp103 each contribute to the shikimate site. NADP(+) contacts are provided by residues 128–132 (GAGGA) and Gly243.

This sequence belongs to the shikimate dehydrogenase family. As to quaternary structure, homodimer.

It catalyses the reaction shikimate + NADP(+) = 3-dehydroshikimate + NADPH + H(+). It functions in the pathway metabolic intermediate biosynthesis; chorismate biosynthesis; chorismate from D-erythrose 4-phosphate and phosphoenolpyruvate: step 4/7. Its function is as follows. Involved in the biosynthesis of the chorismate, which leads to the biosynthesis of aromatic amino acids. Catalyzes the reversible NADPH linked reduction of 3-dehydroshikimate (DHSA) to yield shikimate (SA). The protein is Shikimate dehydrogenase (NADP(+)) of Xanthomonas euvesicatoria pv. vesicatoria (strain 85-10) (Xanthomonas campestris pv. vesicatoria).